The chain runs to 113 residues: Protein RALF-like 31 (113 aa).

The signal sequence occupies residues 1–21; it reads MFNSTALVIFAILFLLISADA. Residues 22 to 58 constitute a propeptide, removed in mature form; sequence FPIPSPNGEIDAMLIRNSIIGEDEDLMPTEISRRVLM. Disulfide bonds link C76-C86 and C98-C104.

This sequence belongs to the plant rapid alkalinization factor (RALF) family. Post-translationally, proteolytically cleaved, probably by S1P, a subtilisin-like serine protease (subtilase).

The protein resides in the secreted. Cell signaling peptide that may regulate plant stress, growth, and development. Mediates a rapid alkalinization of extracellular space by mediating a transient increase in the cytoplasmic Ca(2+) concentration leading to a calcium-dependent signaling events through a cell surface receptor and a concomitant activation of some intracellular mitogen-activated protein kinases. The chain is Protein RALF-like 31 (RALFL31) from Arabidopsis thaliana (Mouse-ear cress).